A 221-amino-acid chain; its full sequence is Adenylate kinase (221 aa).

Residue 10–15 (GAGKGT) participates in ATP binding. The interval 30-59 (STGDMLRAAVKAGTPLGLEAKRFMDAGELV) is NMP. AMP-binding positions include threonine 31, arginine 36, 57-59 (ELV), 85-88 (GFPR), and glutamine 92. The interval 122–159 (GRRSHAASGRTYHVKFNPPKVEGLDDVTGEPLIQRDDD) is LID. ATP-binding positions include arginine 123 and 132–133 (TY). Residues arginine 156 and arginine 167 each coordinate AMP. Glycine 207 is an ATP binding site.

The protein belongs to the adenylate kinase family. Monomer.

It is found in the cytoplasm. The enzyme catalyses AMP + ATP = 2 ADP. The protein operates within purine metabolism; AMP biosynthesis via salvage pathway; AMP from ADP: step 1/1. Functionally, catalyzes the reversible transfer of the terminal phosphate group between ATP and AMP. Plays an important role in cellular energy homeostasis and in adenine nucleotide metabolism. The protein is Adenylate kinase of Paraburkholderia xenovorans (strain LB400).